A 175-amino-acid chain; its full sequence is Large ribosomal subunit protein uL16 (175 aa).

This sequence belongs to the universal ribosomal protein uL16 family.

The chain is Large ribosomal subunit protein uL16 from Metallosphaera sedula (strain ATCC 51363 / DSM 5348 / JCM 9185 / NBRC 15509 / TH2).